Consider the following 195-residue polypeptide: Adenylate kinase (195 aa).

8-16 serves as a coordination point for ATP; that stretch reads GIPGVGKTT.

Belongs to the archaeal adenylate kinase family.

It is found in the cytoplasm. It carries out the reaction AMP + ATP = 2 ADP. The polypeptide is Adenylate kinase (Saccharolobus islandicus (strain M.14.25 / Kamchatka #1) (Sulfolobus islandicus)).